Here is an 81-residue protein sequence, read N- to C-terminus: YcgL domain-containing protein Tgr7_3126 (81 aa).

Residues 1–81 (MQVYVYKSRR…QMPPQNERPL (81 aa)) form the YcgL domain.

The chain is YcgL domain-containing protein Tgr7_3126 from Thioalkalivibrio sulfidiphilus (strain HL-EbGR7).